Reading from the N-terminus, the 170-residue chain is Large ribosomal subunit protein uL5 (170 aa).

The protein belongs to the universal ribosomal protein uL5 family. In terms of assembly, component of the large ribosomal subunit.

The protein resides in the nucleus. The protein localises to the cytoplasm. In terms of biological role, component of the ribosome, a large ribonucleoprotein complex responsible for the synthesis of proteins in the cell. The small ribosomal subunit (SSU) binds messenger RNAs (mRNAs) and translates the encoded message by selecting cognate aminoacyl-transfer RNA (tRNA) molecules. The large subunit (LSU) contains the ribosomal catalytic site termed the peptidyl transferase center (PTC), which catalyzes the formation of peptide bonds, thereby polymerizing the amino acids delivered by tRNAs into a polypeptide chain. The nascent polypeptides leave the ribosome through a tunnel in the LSU and interact with protein factors that function in enzymatic processing, targeting, and the membrane insertion of nascent chains at the exit of the ribosomal tunnel. This Chlamydomonas reinhardtii (Chlamydomonas smithii) protein is Large ribosomal subunit protein uL5 (RPL11).